The sequence spans 123 residues: Con-ikot-ikot (123 aa).

The N-terminal stretch at 1–18 (MAMNMSMTLCMFVMVVVA) is a signal peptide. The propeptide occupies 19 to 37 (ATVIDSTQLQEPDLSRMRR). Cystine bridges form between cysteine 49–cysteine 80, cysteine 50–cysteine 89, cysteine 57–cysteine 72, cysteine 90–cysteine 118, and cysteine 96–cysteine 113.

In terms of assembly, homodimer; disulfide-linked. Expressed by the venom duct.

It localises to the secreted. Its function is as follows. Potently and selectively blocks the desensitization of ionotropic glutamate AMPA receptors (GRIA1, GRIA2, GRIA3 and GRIA4). Binds to a different site than does the drug cyclothiazide. The toxin acts like a straitjacket on the 'gating ring' of the ligand-binding domain (LBD) of the receptor. It does so by restraining the domains via both intra- and interdimer cross-links such that agonist-induced closure of the LBD 'clamshells' is transduced into an irislike expansion of the gating ring. Compared to other desensitization blockers, it is a poor stabilizer of the open channel because toxin-bound AMPA receptors undergo frequent brief closures. In vitro, application of the toxin to hippocampal slices causes a large and rapid increase in resting AMPA receptor-mediated current leading to neuronal death. This Conus striatus (Striated cone) protein is Con-ikot-ikot.